The sequence spans 351 residues: Anthranilate phosphoribosyltransferase (351 aa).

5-phospho-alpha-D-ribose 1-diphosphate is bound by residues Gly90, 93 to 94, Thr98, 100 to 103, 118 to 126, and Ser130; these read GD, NIST, and KHGNRSASG. Gly90 is a binding site for anthranilate. Position 102 (Ser102) interacts with Mg(2+). Anthranilate is bound at residue Asn121. Arg176 contributes to the anthranilate binding site. Positions 235 and 236 each coordinate Mg(2+).

This sequence belongs to the anthranilate phosphoribosyltransferase family. As to quaternary structure, homodimer. Mg(2+) is required as a cofactor.

The catalysed reaction is N-(5-phospho-beta-D-ribosyl)anthranilate + diphosphate = 5-phospho-alpha-D-ribose 1-diphosphate + anthranilate. Its pathway is amino-acid biosynthesis; L-tryptophan biosynthesis; L-tryptophan from chorismate: step 2/5. Catalyzes the transfer of the phosphoribosyl group of 5-phosphorylribose-1-pyrophosphate (PRPP) to anthranilate to yield N-(5'-phosphoribosyl)-anthranilate (PRA). The polypeptide is Anthranilate phosphoribosyltransferase (Prochlorococcus marinus (strain MIT 9313)).